We begin with the raw amino-acid sequence, 168 residues long: Crossover junction endodeoxyribonuclease RuvC (168 aa).

Residues Asp10, Glu70, and Asp143 contribute to the active site. Mg(2+) is bound by residues Asp10, Glu70, and Asp143.

Belongs to the RuvC family. In terms of assembly, homodimer which binds Holliday junction (HJ) DNA. The HJ becomes 2-fold symmetrical on binding to RuvC with unstacked arms; it has a different conformation from HJ DNA in complex with RuvA. In the full resolvosome a probable DNA-RuvA(4)-RuvB(12)-RuvC(2) complex forms which resolves the HJ. Mg(2+) is required as a cofactor.

It localises to the cytoplasm. The catalysed reaction is Endonucleolytic cleavage at a junction such as a reciprocal single-stranded crossover between two homologous DNA duplexes (Holliday junction).. The RuvA-RuvB-RuvC complex processes Holliday junction (HJ) DNA during genetic recombination and DNA repair. Endonuclease that resolves HJ intermediates. Cleaves cruciform DNA by making single-stranded nicks across the HJ at symmetrical positions within the homologous arms, yielding a 5'-phosphate and a 3'-hydroxyl group; requires a central core of homology in the junction. The consensus cleavage sequence is 5'-(A/T)TT(C/G)-3'. Cleavage occurs on the 3'-side of the TT dinucleotide at the point of strand exchange. HJ branch migration catalyzed by RuvA-RuvB allows RuvC to scan DNA until it finds its consensus sequence, where it cleaves and resolves the cruciform DNA. The protein is Crossover junction endodeoxyribonuclease RuvC of Thermotoga maritima (strain ATCC 43589 / DSM 3109 / JCM 10099 / NBRC 100826 / MSB8).